Reading from the N-terminus, the 3567-residue chain is MWSRLAFCCWALALVSGWTNFQPVAPSLNFSFRLFPEASPGALGRLAVPPASSEEEAAGSKVERLGRAFRSRVRRLRELSGSLELVFLVDESSSVGQTNFLNELKFVRKLLSDFPVVSTATRVAIVTFSSKNNVVARVDYISTSRAHQHKCALLSREIPAITYRGGGTYTKGAFQQAAQILRHSRENSTKVIFLITDGYSNGGDPRPIAASLRDFGVEIFTFGIWQGNIRELNDMASTPKEEHCYLLHSFEEFEALARRALHEDLPSGSFIQEDMARCSYLCEAGKDCCDRMASCKCGTHTGQFECICEKGYYGKGLQHECTACPSGTYKPEASPGGISTCIPCPDVSHTSPPGSTSPEDCVCREGYQRSGQTCEVVHCPALKPPENGFFIQNTCKNHFNAACGVRCRPGFDLVGSSIHLCQPNGLWSGTESFCRVRTCPHLRQPKHGHISCSTAEMSYNTLCLVTCNEGYRLEGSTRLTCQGNAQWDGPEPRCVERHCATFQKPKGVIISPPSCGKQPARPGMTCQLSCRQGYILSGVREVRCATSGKWSAKVQTAVCKDVEAPQISCPNDIEAKTGEQQDSANVTWQVPTAKDNSGEKVSVHVHPAFTPPYLFPIGDVAITYTATDSSGNQASCTFYIKVIDVEPPVIDWCRSPPPIQVVEKEHPASWDEPQFSDNSGAELVITSSHTQGDMFPHGETVVWYTATDPSGNNRTCDIHIVIKGSPCEVPFTPVNGDFICAQDSAGVNCSLSCKEGYDFTEGSTEKYYCAFEDGIWRPPYSTEWPDCAIKRFANHGFKSFEMLYKTTRCDDMDLFKKFSAAFETTLGNMVPSFCNDADDIDCRLEDLTKKYCIEYNYNYENGFAIGPGGWGAGNRLDYSYDHFLDVVQETPTDVGKARSSRIKRTVPLSDPKIQLIFNITASVPLPEERNDTLELENQQRLIKTLETITNRLKSTLNKEPMYSFQLASETVVADSNSLETEKAFLFCRPGSVLRGRMCVNCPLGTSYSLEHSTCESCLMGSYQDEEGQLECKLCPPRTHTEYLHSRSVSECKAQCKQGTYSSSGLETCESCPLGTYQPEFGSRSCLLCPETTTTVKRGAVDISACGVPCPVGEFSRSGLTPCYPCPRDYYQPNAGKSFCLACPFYGTTTITGATSITDCSSFSSTFSAAEESIVPLVAPGHSQNKYEVSSQVFHECFLNPCHNSGTCQQLGRGYVCLCPPGYTGLKCETDIDECSSLPCLNGGICRDQVGGFTCECSLGYSGQICEENINECISSPCLNKGTCTDGLASYRCTCVKGYMGVHCETDVNECQSSPCLNNAVCKDQVGGFSCKCPPGFLGTRCEKNVDECLSQPCQNGATCKDGANSFRCQCPAGFTGTHCELNINECQSNPCRNQATCVDELNSYSCKCQPGFSGHRCETEQPSGFNLDFEVSGIYGYVLLDGVLPTLHAITCAFWMKSSDVINYGTPISYALEDDKDNTFLLTDYNGWVLYVNGKEKITNCPSVNDGIWHHIAITWTSTGGAWRVYIDGELSDGGTGLSIGKAIPGGGALVLGQEQDKKGEGFNPAESFVGSISQLNLWDYVLSPQQVKLLASSCPEELSRGNVLAWPDFLSGITGKVKVDSSSMFCSDCPSLEGSVPHLRPASGNRKPGSKVSLFCDPGFQMVGNPVQYCLNQGQWTQPLPHCERIRCGLPPALENGFYSAEDFHAGSTVTYQCTSGYYLLGDSRMFCTDNGSWNGISPSCLDVDECAVGSDCSEHASCLNTNGSYVCSCNPPYTGDGKNCAEPVKCKAPENPENGHSSGEIYTVGTAVTFSCDEGHELVGVSTITCLETGEWDRLRPSCEAISCGVPPVPENGGVDGSAFTYGSKVVYRCDKGYTLSGDEESACLASGSWSHSSPVCELVKCSQPEDINNGKYILSGLTYLSIASYSCENGYSLQGPSLLECTASGSWDRAPPSCQLVSCGEPPIVKDAVITGSNFTFGNTVAYTCKEGYTLAGPDTIVCQANGKWNSSNHQCLAVSCDEPPNVDHASPETAHRLFGDTAFYYCADGYSLADNSQLICNAQGNWVPPAGQAVPRCIAHFCEKPPSVSYSILESVSKAKFAAGSVVSFKCMEGFVLNTSAKIECLRGGEWSPSPLSVQCIPVRCGEPPSIANGYPSGTNYSFGAVVAYSCHKGFYIKGEKKSTCEATGQWSKPTPTCHPVSCNEPPKVENGFLEHTTGRTFESEARFQCNPGYKAAGSPVFVCQANRHWHSDAPLSCTPLNCGKPPPIQNGFLKGESFEVGSKVQFVCNEGYELVGDNSWTCQKSGKWSKKPSPKCVPTKCAEPPLLENQLVLKELASEVGVMTISCKEGHALQGPSVLKCLPSGQWNGSFPICKMVLCPSPPLIPFGVPASSGALHFGSTVKYLCVDGFFLRGSPTILCQADSTWSSPLPECVPVECPQPEEILNGIIHVQGLAYLSTTLYTCKPGFELVGNATTLCGENGQWLGGKPMCKPIECPEPKEILNGQFSSVSFQYGQTITYFCDRGFRLEGPKSLTCLETGDWDMDPPSCDAIHCSDPQPIENGFVEGADYRYGAMIIYSCFPGFQVLGHAMQTCEESGWSSSSPTCVPIDCGLPPHIDFGDCTKVRDGQGHFDQEDDMMEVPYLAHPQHLEATAKALENTKESPASHASHFLYGTMVSYSCEPGYELLGIPVLICQEDGTWNGTAPSCISIECDLPVAPENGFLHFTQTTMGSAAQYSCKPGHILEGSHLRLCLQNKQWSGTVPRCEAISCSKPNPLWNGSIKGDDYSYLGVLYYECDSGYILNGSKKRTCQENRDWDGHEPMCIPVDCGSPPVPTNGRVKGEEYTFQKEITYSCREGFILEGARSRICLTNGSWSGATPSCMPVRCPAPPQVPNGVADGLDYGFKKEVAFHCLEGYVLQGAPRLTCQSNGTWDAEVPVCKPATCGPPADLPQGFPNGFSFYHGGHIQYQCFTGYKLHGNPSRRCLPNGSWSGSSPSCLPCRCSTPIIQQGTINATDLGCGKTVQIECFKGFKLLGLSEITCDANGQWSDVPLCEHAQCGPLPTIPNAIVLEGSLSEDNVVTYSCRPGYTMQGSSDLICTEKAIWSQPYPTCEPLSCGPPPTVANAVATGEAHTYESKVKLRCLEGYVMDSDTDTFTCQQDGHWVPERITCSPKKCPVPSNMTRIRFHGDDFQVNRQVSVSCAEGFTHEGVNWSTCQPDGTWEPPFSDESCIPVVCGHPESPAHGSVVGNKHSFGSTIVYQCDPGYKLEGNRERICQENRQWSGEVAVCRENRCETPAEFPNGKAVLENTTSGPSLLFSCHRGYTLEGSPEAHCTANGTWNHLTPLCKPNPCPVPFVIPENAVLSEKEFYVDQNVSIKCREGFLLKGNGVITCSPDETWTHTNARCEKISCGPPSHVENAIARGVYYQYGDMITYSCYSGYMLEGSLRSVCLENGTWTPSPVCRAVCRFPCQNGGVCQRPNACSCPDGWMGRLCEEPICILPCLNGGRCVAPYQCDCPTGWTGSRCHTATCQSPCLNGGKCIRPNRCHCLSAWTGHDCSRKRRAGL.

The signal sequence occupies residues 1–17 (MWSRLAFCCWALALVSG). The region spanning 84 to 265 (ELVFLVDESS…LARRALHEDL (182 aa)) is the VWFA domain. The N-linked (GlcNAc...) asparagine glycan is linked to N187. Sushi domains follow at residues 377 to 436 (VHCP…FCRV), 437 to 496 (RTCP…RCVE), and 497 to 561 (RHCA…VCKD). 6 cysteine pairs are disulfide-bonded: C379-C421, C407-C434, C439-C481, C467-C494, C499-C544, and C530-C559. HYR domains follow at residues 560-644 (KDVE…KVID) and 645-724 (VEPP…VIKG). Positions 725–789 (SPCEVPFTPV…YSTEWPDCAI (65 aa)) constitute a Sushi 4 domain. Intrachain disulfides connect C727-C769, C753-C787, C1196-C1207, C1201-C1216, C1218-C1227, C1234-C1245, C1239-C1254, C1256-C1265, C1272-C1283, C1277-C1292, C1294-C1303, C1310-C1321, C1315-C1330, C1332-C1341, C1348-C1359, C1353-C1368, C1370-C1379, C1386-C1397, C1391-C1406, and C1408-C1417. Positions 1192 to 1228 (VFHECFLNPCHNSGTCQQLGRGYVCLCPPGYTGLKCE) constitute an EGF-like 1 domain. Positions 1230–1266 (DIDECSSLPCLNGGICRDQVGGFTCECSLGYSGQICE) constitute an EGF-like 2; calcium-binding domain. The EGF-like 3; calcium-binding domain maps to 1268-1304 (NINECISSPCLNKGTCTDGLASYRCTCVKGYMGVHCE). Positions 1306–1342 (DVNECQSSPCLNNAVCKDQVGGFSCKCPPGFLGTRCE) constitute an EGF-like 4; calcium-binding domain. In terms of domain architecture, EGF-like 5; calcium-binding spans 1344–1380 (NVDECLSQPCQNGATCKDGANSFRCQCPAGFTGTHCE). The EGF-like 6; calcium-binding domain occupies 1382–1418 (NINECQSNPCRNQATCVDELNSYSCKCQPGFSGHRCE). Residues 1423-1627 (SGFNLDFEVS…VKVDSSSMFC (205 aa)) enclose the Pentraxin (PTX) domain. Sushi domains are found at residues 1628 to 1686 (SDCP…HCER) and 1687 to 1744 (IRCG…SCLD). Cystine bridges form between C1630/C1671, C1657/C1684, C1689/C1729, C1715/C1742, C1748/C1760, C1754/C1769, C1771/C1782, C1788/C1828, C1814/C1841, C1846/C1886, C1872/C1899, C1904/C1944, C1930/C1957, C1962/C2002, C1988/C2015, C2020/C2060, C2046/C2077, C2082/C2125, C2111/C2140, C2145/C2185, C2171/C2198, C2203/C2244, C2230/C2258, C2263/C2303, C2289/C2317, C2322/C2362, C2348/C2375, C2380/C2421, C2407/C2434, C2439/C2479, C2465/C2492, C2497/C2537, C2523/C2550, C2555/C2595, and C2581/C2607. In terms of domain architecture, EGF-like 7; calcium-binding spans 1744 to 1783 (DVDECAVGSDCSEHASCLNTNGSYVCSCNPPYTGDGKNCA). 14 Sushi domains span residues 1780–1843 (KNCA…SCEA), 1844–1901 (ISCG…VCEL), 1902–1959 (VKCS…SCQL), 1960–2017 (VSCG…QCLA), 2018–2079 (VSCD…RCIA), 2080–2142 (HFCE…QCIP), 2143–2200 (VRCG…TCHP), 2201–2260 (VSCN…SCTP), 2261–2319 (LNCG…KCVP), 2320–2377 (TKCA…ICKM), 2378–2436 (VLCP…ECVP), 2437–2494 (VECP…MCKP), 2495–2552 (IECP…SCDA), and 2553–2609 (IHCS…TCVP). Residues 2638–2645 (DMMEVPYL) form an important for the interaction with integrin ITGA9:ITGB1 region. 14 Sushi domains span residues 2660 to 2711 (NTKE…SCIS), 2712 to 2769 (IECD…RCEA), 2770 to 2827 (ISCS…MCIP), 2828 to 2885 (VDCG…SCMP), 2886 to 2943 (VRCP…VCKP), 2944 to 3001 (ATCG…SCLP), 3002 to 3057 (CRCS…LCEH), 3058 to 3115 (AQCG…TCEP), 3116 to 3174 (LSCG…TCSP), 3175 to 3234 (KKCP…SCIP), 3235 to 3292 (VVCG…VCRE), 3293 to 3350 (NRCE…LCKP), 3351 to 3409 (NPCP…RCEK), and 3410 to 3466 (ISCG…VCRA). Disulfide bonds link C2682/C2709, C2714/C2754, C2740/C2767, C2772/C2812, C2798/C2825, C2830/C2870, C2856/C2883, C2888/C2928, C2914/C2941, C2946/C2986, C2972/C2999, C3004/C3043, C3029/C3055, C3060/C3100, C3086/C3113, C3118/C3159, C3144/C3172, C3177/C3217, C3203/C3232, C3237/C3277, C3263/C3290, C3295/C3335, C3321/C3348, C3353/C3394, C3380/C3407, C3412/C3452, C3438/C3464, C3500/C3510, C3504/C3516, C3518/C3527, C3532/C3542, C3536/C3548, and C3550/C3559. EGF-like domains lie at 3496–3528 (EEPI…SRCH) and 3529–3560 (TATC…HDCS).

In terms of assembly, interacts (via Sushi domain 21) with ITGA9:ITGB1; thereby inhibits Ca(2+) intracellular signaling and as a result represses vasocontraction. Interacts (via Sushi domain 21) with ITGA4:ITGB1; thereby inhibits Ca(2+) intracellular signaling and as a result represses vasocontraction. Interacts with ANGPT1 and ANGPT2. Interacts with PEAR1 (via extracellular domain). Interacts with HSPG2, TLN1, FN1, COPA, CCT2, IQGAP1, LAMC1 and NID1. Interacts (via C-terminus) with TIE1. Expressed in the media layer of the arterial wall (at protein level). Highly expressed in lung and placenta, weakly expressed in the kidney, heart, brain and spleen. Also expressed in bone and periosteum, but not in cartilage and skeletal muscle.

The protein resides in the secreted. Its subcellular location is the nucleus. The protein localises to the cytoplasm. It localises to the membrane. In terms of biological role, required for morphological development, cell alignment and migration of lymphatic endothelial cells during embryonic development, potentially via modulation of ANGPT2-TIE1 signaling and subsequent activation of FOXC2 transcription. Required for embryonic lymphatic vascular development, via mediating the correct formation of the first lymphovenous contact site and tight association of the lymphatic endothelium with the venous endothelium. Represses PRKCA-mediated L-type voltage-gated channel Ca(2+) influx and ROCK-mediated calcium sensitivity in vascular smooth muscle cells, via its interaction with integrins, thereby inhibiting vasocontraction. Promotes platelet activation, via its interaction with PEAR1 and subsequent activation of AKT/mTOR signaling. Plays a role in epidermal development and keratinocyte differentiation, independent of cell-cell adhesion. May play a role in initial cell attachment of stromal osteogenic cells. May promote myoblast cell adhesion when in the presence of integrin ITGA9:ITGB1. The polypeptide is Sushi, von Willebrand factor type A, EGF and pentraxin domain-containing protein 1 (Svep1) (Mus musculus (Mouse)).